The primary structure comprises 389 residues: Mitochondrial carrier homolog 1 (389 aa).

Residues Met-1–Ala-78 form a disordered region. Over Met-1 to Thr-93 the chain is Mitochondrial intermembrane. Gly residues predominate over residues Gly-15–Pro-33. At Arg-29 the chain carries Omega-N-methylarginine. Solcar repeat units follow at residues Thr-81–Asp-176 and Lys-192–Tyr-280. A helical membrane pass occupies residues Ala-94–Leu-104. Residues Leu-105 to Arg-155 lie on the Cytoplasmic side of the membrane. Residues Leu-156–Asp-176 traverse the membrane as a helical segment. Topologically, residues Glu-177–Arg-209 are mitochondrial intermembrane. A helical transmembrane segment spans residues Met-210–Arg-229. At Glu-230 to Val-254 the chain is on the cytoplasmic side. Residues Gly-255–Ala-279 traverse the membrane as a helical segment. Residues Tyr-280–Ser-322 are Mitochondrial intermembrane-facing. Residues Met-323–Leu-342 traverse the membrane as a helical segment. Over Arg-343–Arg-371 the chain is Cytoplasmic. A helical transmembrane segment spans residues Gly-372 to Glu-389.

Belongs to the mitochondrial carrier (TC 2.A.29) family. As to quaternary structure, interacts with PSEN1.

The protein localises to the mitochondrion outer membrane. Functionally, protein insertase that mediates insertion of transmembrane proteins into the mitochondrial outer membrane. Catalyzes insertion of proteins with alpha-helical transmembrane regions, such as signal-anchored, tail-anchored and multi-pass membrane proteins. Does not mediate insertion of beta-barrel transmembrane proteins. May play a role in apoptosis. This chain is Mitochondrial carrier homolog 1 (Mtch1), found in Mus musculus (Mouse).